The primary structure comprises 490 residues: Prostaglandin E2 receptor EP4 subtype (490 aa).

The Extracellular portion of the chain corresponds to 1–19; the sequence is MSTPGVNASASLSPDRLNS. Asn-7 carries an N-linked (GlcNAc...) asparagine glycan. A helical membrane pass occupies residues 20–43; it reads PVTIPAVMFIFGVVGNLVAIVVLC. The Cytoplasmic segment spans residues 44–55; the sequence is KSRKEQKETTFY. A helical transmembrane segment spans residues 56–79; that stretch reads TLVCGLAVTDLLGTLLVSPVTIAT. Residues 80–96 lie on the Extracellular side of the membrane; that stretch reads YMKGQWPGGQPLCEYST. Cys-92 and Cys-170 are joined by a disulfide. A helical membrane pass occupies residues 97 to 115; it reads FILLFFSLSGLSIICAMSV. Residues 116–135 are Cytoplasmic-facing; it reads ERYLAINHAYFYSHYVDKRL. The chain crosses the membrane as a helical span at residues 136–160; the sequence is AGLTLFAVYASNVLFCALPNMGLGS. Residues 161–184 lie on the Extracellular side of the membrane; sequence SRLQYPDTWCFIDWTTNVTAHAAY. The helical transmembrane segment at 185–211 threads the bilayer; sequence SYMYAGFSSFLILATVLCNVLVCGALL. Residues 212-269 are Cytoplasmic-facing; it reads RMHRQFMRRTSLGTEQHHAAAAAVTSVASRGHPAASPALPRLSDFRRRRSFRRIAGAE. A helical transmembrane segment spans residues 270–297; sequence IQMVILLIATSLVVLICSIPLVVRVFVN. Topologically, residues 298-314 are extracellular; that stretch reads QLYQPSLEREVSKNPDL. Residues 315–334 traverse the membrane as a helical segment; that stretch reads QAIRIASVNPILDPWIYILL. At 335-490 the chain is on the cytoplasmic side; that stretch reads RKTVLSKAIE…ETLNLSEKCI (156 aa). Positions 359–378 are disordered; sequence ERSGQHCSDSQRTSSAMSGH. Positions 363 to 378 are enriched in polar residues; sequence QHCSDSQRTSSAMSGH. Ser-376, Ser-379, Ser-381, and Ser-384 each carry phosphoserine. Residues 439–451 show a composition bias toward polar residues; it reads SETSDSSQGQDSE. The interval 439–477 is disordered; it reads SETSDSSQGQDSESVLLVDEAGGSGRAGPAPKGSSLQVT.

The protein belongs to the G-protein coupled receptor 1 family. In terms of assembly, interacts with FEM1A. Phosphorylation mediates agonist-mediated desensitization by promoting cytoplasmic retention.

Its subcellular location is the cell membrane. Its function is as follows. Receptor for prostaglandin E2 (PGE2). The activity of this receptor is mediated by G(s) proteins that stimulate adenylate cyclase. Has a relaxing effect on smooth muscle. May play an important role in regulating renal hemodynamics, intestinal epithelial transport, adrenal aldosterone secretion, and uterine function. In Pan troglodytes (Chimpanzee), this protein is Prostaglandin E2 receptor EP4 subtype (PTGER4).